Consider the following 187-residue polypeptide: Elongation factor P (187 aa).

Belongs to the elongation factor P family.

It is found in the cytoplasm. Its pathway is protein biosynthesis; polypeptide chain elongation. Its function is as follows. Involved in peptide bond synthesis. Stimulates efficient translation and peptide-bond synthesis on native or reconstituted 70S ribosomes in vitro. Probably functions indirectly by altering the affinity of the ribosome for aminoacyl-tRNA, thus increasing their reactivity as acceptors for peptidyl transferase. The polypeptide is Elongation factor P (Mycoplasmopsis pulmonis (strain UAB CTIP) (Mycoplasma pulmonis)).